The primary structure comprises 320 residues: HPr kinase/phosphorylase (320 aa).

Catalysis depends on residues H141 and K162. Residue 156–163 coordinates ATP; sequence GHSGLGKS. Residue S163 participates in Mg(2+) binding. D180 acts as the Proton acceptor; for phosphorylation activity. Proton donor; for dephosphorylation activity in catalysis. The interval 204–213 is important for the catalytic mechanism of both phosphorylation and dephosphorylation; sequence LEVRGLGILN. E205 contacts Mg(2+). R248 is an active-site residue. Residues 269–274 form an important for the catalytic mechanism of dephosphorylation region; sequence PVAVGR.

This sequence belongs to the HPrK/P family. In terms of assembly, homohexamer. The cofactor is Mg(2+).

It catalyses the reaction [HPr protein]-L-serine + ATP = [HPr protein]-O-phospho-L-serine + ADP + H(+). The enzyme catalyses [HPr protein]-O-phospho-L-serine + phosphate + H(+) = [HPr protein]-L-serine + diphosphate. Catalyzes the ATP- as well as the pyrophosphate-dependent phosphorylation of a specific serine residue in HPr, a phosphocarrier protein of the phosphoenolpyruvate-dependent sugar phosphotransferase system (PTS). HprK/P also catalyzes the pyrophosphate-producing, inorganic phosphate-dependent dephosphorylation (phosphorolysis) of seryl-phosphorylated HPr (P-Ser-HPr). This Neisseria meningitidis serogroup C / serotype 2a (strain ATCC 700532 / DSM 15464 / FAM18) protein is HPr kinase/phosphorylase.